Here is a 178-residue protein sequence, read N- to C-terminus: ATP-dependent protease subunit HslV (178 aa).

The active site involves Thr-7. Residues Gly-162, Cys-165, and Thr-168 each coordinate Na(+).

The protein belongs to the peptidase T1B family. HslV subfamily. As to quaternary structure, a double ring-shaped homohexamer of HslV is capped on each side by a ring-shaped HslU homohexamer. The assembly of the HslU/HslV complex is dependent on binding of ATP.

Its subcellular location is the cytoplasm. It catalyses the reaction ATP-dependent cleavage of peptide bonds with broad specificity.. Allosterically activated by HslU binding. In terms of biological role, protease subunit of a proteasome-like degradation complex believed to be a general protein degrading machinery. The polypeptide is ATP-dependent protease subunit HslV (Cupriavidus metallidurans (strain ATCC 43123 / DSM 2839 / NBRC 102507 / CH34) (Ralstonia metallidurans)).